The chain runs to 283 residues: Bifunctional protein FolD 2 (283 aa).

NADP(+) is bound by residues 165-167 (GRG), threonine 192, and valine 233.

This sequence belongs to the tetrahydrofolate dehydrogenase/cyclohydrolase family. As to quaternary structure, homodimer.

It carries out the reaction (6R)-5,10-methylene-5,6,7,8-tetrahydrofolate + NADP(+) = (6R)-5,10-methenyltetrahydrofolate + NADPH. It catalyses the reaction (6R)-5,10-methenyltetrahydrofolate + H2O = (6R)-10-formyltetrahydrofolate + H(+). Its pathway is one-carbon metabolism; tetrahydrofolate interconversion. Functionally, catalyzes the oxidation of 5,10-methylenetetrahydrofolate to 5,10-methenyltetrahydrofolate and then the hydrolysis of 5,10-methenyltetrahydrofolate to 10-formyltetrahydrofolate. The chain is Bifunctional protein FolD 2 from Nocardioides sp. (strain ATCC BAA-499 / JS614).